The sequence spans 181 residues: Ribosome-recycling factor (181 aa).

The protein belongs to the RRF family.

It localises to the cytoplasm. Functionally, responsible for the release of ribosomes from messenger RNA at the termination of protein biosynthesis. May increase the efficiency of translation by recycling ribosomes from one round of translation to another. The protein is Ribosome-recycling factor of Tropheryma whipplei (strain TW08/27) (Whipple's bacillus).